A 150-amino-acid chain; its full sequence is Small ribosomal subunit protein uS13 (150 aa).

The tract at residues 131–150 (QRTKSTFRRGPTVGVSRRKK) is disordered.

This sequence belongs to the universal ribosomal protein uS13 family. As to quaternary structure, part of the 30S ribosomal subunit. Forms a loose heterodimer with protein S19. Forms two bridges to the 50S subunit in the 70S ribosome.

In terms of biological role, located at the top of the head of the 30S subunit, it contacts several helices of the 16S rRNA. In the 70S ribosome it contacts the 23S rRNA (bridge B1a) and protein L5 of the 50S subunit (bridge B1b), connecting the 2 subunits; these bridges are implicated in subunit movement. This Methanocaldococcus jannaschii (strain ATCC 43067 / DSM 2661 / JAL-1 / JCM 10045 / NBRC 100440) (Methanococcus jannaschii) protein is Small ribosomal subunit protein uS13.